The sequence spans 46 residues: Esculentin-1GRa (46 aa).

As to expression, expressed by the skin glands.

It localises to the secreted. Antimicrobial peptide active against the Gram-positive bacterium S.aureus (MIC=12.5 uM) and against the Gram-negative bacterium E.coli (MIC=6 uM). Has no antifungal activity against C.albicans. Shows hemolytic activity against human erythrocytes only at high concentrations (LC(50)=210 uM). The protein is Esculentin-1GRa of Odorrana grahami (Yunnanfu frog).